We begin with the raw amino-acid sequence, 342 residues long: Biotin synthase (342 aa).

The Radical SAM core domain maps to 63–290; it reads NTVQLSTLLS…GAMVRLSAGR (228 aa). 3 residues coordinate [4Fe-4S] cluster: Cys-78, Cys-82, and Cys-85. Residues Cys-122, Cys-153, Cys-213, and Arg-285 each coordinate [2Fe-2S] cluster.

It belongs to the radical SAM superfamily. Biotin synthase family. Homodimer. Requires [4Fe-4S] cluster as cofactor. [2Fe-2S] cluster serves as cofactor.

It carries out the reaction (4R,5S)-dethiobiotin + (sulfur carrier)-SH + 2 reduced [2Fe-2S]-[ferredoxin] + 2 S-adenosyl-L-methionine = (sulfur carrier)-H + biotin + 2 5'-deoxyadenosine + 2 L-methionine + 2 oxidized [2Fe-2S]-[ferredoxin]. Its pathway is cofactor biosynthesis; biotin biosynthesis; biotin from 7,8-diaminononanoate: step 2/2. In terms of biological role, catalyzes the conversion of dethiobiotin (DTB) to biotin by the insertion of a sulfur atom into dethiobiotin via a radical-based mechanism. The protein is Biotin synthase of Cupriavidus pinatubonensis (strain JMP 134 / LMG 1197) (Cupriavidus necator (strain JMP 134)).